A 570-amino-acid chain; its full sequence is Pleckstrin homology domain-containing family D member 1 (570 aa).

A compositionally biased stretch (basic and acidic residues) spans 1-13 (MTTKTTPKELKAK). Residues 1–42 (MTTKTTPKELKAKKESKKKGSAPEPPKNGPPRTSPPNTIEKK) form a disordered region. Over residues 23 to 34 (PEPPKNGPPRTS) the composition is skewed to pro residues. Residues 83–192 (GVQNYGILMK…WLKALRSATK (110 aa)) enclose the PH domain. Residues 202–448 (ETMIRELENR…TGAQMTELQE (247 aa)) are a coiled coil. Positions 542-551 (SKRGIRSSFR) are enriched in basic residues. The segment at 542-570 (SKRGIRSSFRKKTDSITTQPREKEPLMQL) is disordered. A compositionally biased stretch (basic and acidic residues) spans 561–570 (PREKEPLMQL).

It belongs to the PLEKHD1 family.

The sequence is that of Pleckstrin homology domain-containing family D member 1 from Caenorhabditis elegans.